We begin with the raw amino-acid sequence, 92 residues long: N(2)-fixation sustaining protein CowN (92 aa).

Belongs to the CowN family.

In terms of biological role, is required to sustain N(2)-dependent growth in the presence of low levels of carbon monoxide (CO). Probably acts by protecting the N(2) fixation ability of the nitrogenase complex, which is inactivated in the presence of CO. The protein is N(2)-fixation sustaining protein CowN of Cereibacter sphaeroides (strain ATCC 17025 / ATH 2.4.3) (Rhodobacter sphaeroides).